Consider the following 226-residue polypeptide: Phosphoribosylformylglycinamidine synthase subunit PurQ (226 aa).

The Glutamine amidotransferase type-1 domain occupies 2-226 (KFAVIQFPGS…LKNFLVTVKN (225 aa)). Residue Cys-86 is the Nucleophile of the active site. Active-site residues include His-195 and Glu-197.

As to quaternary structure, part of the FGAM synthase complex composed of 1 PurL, 1 PurQ and 2 PurS subunits.

Its subcellular location is the cytoplasm. It carries out the reaction N(2)-formyl-N(1)-(5-phospho-beta-D-ribosyl)glycinamide + L-glutamine + ATP + H2O = 2-formamido-N(1)-(5-O-phospho-beta-D-ribosyl)acetamidine + L-glutamate + ADP + phosphate + H(+). It catalyses the reaction L-glutamine + H2O = L-glutamate + NH4(+). The protein operates within purine metabolism; IMP biosynthesis via de novo pathway; 5-amino-1-(5-phospho-D-ribosyl)imidazole from N(2)-formyl-N(1)-(5-phospho-D-ribosyl)glycinamide: step 1/2. Functionally, part of the phosphoribosylformylglycinamidine synthase complex involved in the purines biosynthetic pathway. Catalyzes the ATP-dependent conversion of formylglycinamide ribonucleotide (FGAR) and glutamine to yield formylglycinamidine ribonucleotide (FGAM) and glutamate. The FGAM synthase complex is composed of three subunits. PurQ produces an ammonia molecule by converting glutamine to glutamate. PurL transfers the ammonia molecule to FGAR to form FGAM in an ATP-dependent manner. PurS interacts with PurQ and PurL and is thought to assist in the transfer of the ammonia molecule from PurQ to PurL. The polypeptide is Phosphoribosylformylglycinamidine synthase subunit PurQ (Lactococcus lactis subsp. cremoris (Streptococcus cremoris)).